The chain runs to 111 residues: Large ribosomal subunit protein eL42 (111 aa).

The Zn(2+) site is built by cysteine 12, cysteine 15, cysteine 72, and cysteine 77.

Belongs to the eukaryotic ribosomal protein eL42 family. Component of the large ribosomal subunit.

Its subcellular location is the cytoplasm. In terms of biological role, component of the large ribosomal subunit. The ribosome is a large ribonucleoprotein complex responsible for the synthesis of proteins in the cell. The sequence is that of Large ribosomal subunit protein eL42 (RPL36A) from Oryctolagus cuniculus (Rabbit).